A 240-amino-acid polypeptide reads, in one-letter code: MGQKTNPIGLRLGINKNWRSRWFINYNTMPENVLGDYELRKFLKKKLYYAGISDIIIERTAKKIRITIFAAKPGIIIGKGGSEIEALKAELQKRIGNKELILNIKEERKPQLSAQLAAENVATQIERRVAFRRAMKKVIQSALKSGAKGIKVQVAGRLNGAEMARTEWYLEGRVPLHTLRAKIDYGFAEALTTYGIIGVKVWIFKGEVLQRKMNSDDTATPERKAPRRRKGRRNVNAKKN.

One can recognise a KH type-2 domain in the interval 39-108; sequence LRKFLKKKLY…ELILNIKEER (70 aa). The segment covering 213 to 224 has biased composition (basic and acidic residues); sequence MNSDDTATPERK. Residues 213 to 240 are disordered; sequence MNSDDTATPERKAPRRRKGRRNVNAKKN. Residues 225–240 show a composition bias toward basic residues; sequence APRRRKGRRNVNAKKN.

It belongs to the universal ribosomal protein uS3 family. In terms of assembly, part of the 30S ribosomal subunit. Forms a tight complex with proteins S10 and S14.

In terms of biological role, binds the lower part of the 30S subunit head. Binds mRNA in the 70S ribosome, positioning it for translation. The sequence is that of Small ribosomal subunit protein uS3 from Nautilia profundicola (strain ATCC BAA-1463 / DSM 18972 / AmH).